Consider the following 358-residue polypeptide: UDP-N-acetylglucosamine--N-acetylmuramyl-(pentapeptide) pyrophosphoryl-undecaprenol N-acetylglucosamine transferase (358 aa).

UDP-N-acetyl-alpha-D-glucosamine contacts are provided by residues 11–13 (TGG), Asn-120, Arg-161, Ser-188, and Gln-282.

It belongs to the glycosyltransferase 28 family. MurG subfamily.

The protein localises to the cell inner membrane. The enzyme catalyses di-trans,octa-cis-undecaprenyl diphospho-N-acetyl-alpha-D-muramoyl-L-alanyl-D-glutamyl-meso-2,6-diaminopimeloyl-D-alanyl-D-alanine + UDP-N-acetyl-alpha-D-glucosamine = di-trans,octa-cis-undecaprenyl diphospho-[N-acetyl-alpha-D-glucosaminyl-(1-&gt;4)]-N-acetyl-alpha-D-muramoyl-L-alanyl-D-glutamyl-meso-2,6-diaminopimeloyl-D-alanyl-D-alanine + UDP + H(+). It participates in cell wall biogenesis; peptidoglycan biosynthesis. In terms of biological role, cell wall formation. Catalyzes the transfer of a GlcNAc subunit on undecaprenyl-pyrophosphoryl-MurNAc-pentapeptide (lipid intermediate I) to form undecaprenyl-pyrophosphoryl-MurNAc-(pentapeptide)GlcNAc (lipid intermediate II). This Synechococcus sp. (strain CC9902) protein is UDP-N-acetylglucosamine--N-acetylmuramyl-(pentapeptide) pyrophosphoryl-undecaprenol N-acetylglucosamine transferase.